Consider the following 292-residue polypeptide: MEITASLVKELRERTGAGMMECKKALVENAGDIDAAAEWLRKSGLAKADKKADRVAAEGRIATAQAGGKAVLVEVNSETDFVAKDENFLAFTDVVANAALNSDAADADALKSVKLDSGETIEERRAAVIAKVGENLQVRRLVRIDSANNVAAYVHGGRIGVLVELKGGDAELARGIAMHIAAMNPPHVKASDVPAEFVAKEKEIELAKMSEKDKAKPAEILEKIISGKISKIVNEVTLYGQPYVLNTDQTVEQAVKAAGAEVIGFQRLAVGEGIEKVVEDYAAEVMKQAGLA.

Residues 79–82 (TDFV) are involved in Mg(2+) ion dislocation from EF-Tu.

It belongs to the EF-Ts family.

The protein localises to the cytoplasm. Associates with the EF-Tu.GDP complex and induces the exchange of GDP to GTP. It remains bound to the aminoacyl-tRNA.EF-Tu.GTP complex up to the GTP hydrolysis stage on the ribosome. This chain is Elongation factor Ts, found in Xanthomonas campestris pv. campestris (strain B100).